A 22-amino-acid chain; its full sequence is QGCCNVPNGCSGRWCRDHAQCC.

Position 1 is a pyrrolidone carboxylic acid (Gln-1). Disulfide bonds link Cys-3–Cys-15, Cys-4–Cys-21, and Cys-10–Cys-22. Cys-22 carries the post-translational modification Cysteine amide.

This sequence belongs to the conotoxin M superfamily. Expressed by the venom duct.

It is found in the secreted. Mu-conotoxins block voltage-gated sodium channels (Nav). This synthetic toxin potently blocks rNav1.3/SCN3A. It also moderately blocks rNav1.1/SCN1A, rNav1.2/SCN2A, rNav1.4/SCN4A, mNav1.6/SCN8A, and Nav1.7/SCN9A. sodium channels. This block is very slowly reversible. The sequence is that of Mu-conotoxin MIIIA from Conus magus (Magical cone).